The chain runs to 183 residues: Nucleoside triphosphate pyrophosphatase (183 aa).

Catalysis depends on aspartate 71, which acts as the Proton acceptor.

This sequence belongs to the Maf family. Requires a divalent metal cation as cofactor.

It is found in the cytoplasm. It catalyses the reaction a ribonucleoside 5'-triphosphate + H2O = a ribonucleoside 5'-phosphate + diphosphate + H(+). The enzyme catalyses a 2'-deoxyribonucleoside 5'-triphosphate + H2O = a 2'-deoxyribonucleoside 5'-phosphate + diphosphate + H(+). In terms of biological role, nucleoside triphosphate pyrophosphatase. May have a dual role in cell division arrest and in preventing the incorporation of modified nucleotides into cellular nucleic acids. The protein is Nucleoside triphosphate pyrophosphatase of Campylobacter jejuni subsp. jejuni serotype O:6 (strain 81116 / NCTC 11828).